Consider the following 395-residue polypeptide: Elongation factor Tu (395 aa).

In terms of domain architecture, tr-type G spans 10–204; the sequence is KPHVNIGTIG…EVDAYIPTPE (195 aa). Positions 19–26 are G1; it reads GHVDHGKT. 19–26 is a binding site for GTP; that stretch reads GHVDHGKT. Threonine 26 is a binding site for Mg(2+). The segment at 60 to 64 is G2; the sequence is GITIS. A G3 region spans residues 81–84; it reads DCPG. Residues 81 to 85 and 136 to 139 each bind GTP; these read DCPGH and NKCD. Positions 136–139 are G4; it reads NKCD. A G5 region spans residues 174–176; sequence SAL.

The protein belongs to the TRAFAC class translation factor GTPase superfamily. Classic translation factor GTPase family. EF-Tu/EF-1A subfamily. Monomer.

The protein localises to the cytoplasm. It catalyses the reaction GTP + H2O = GDP + phosphate + H(+). Functionally, GTP hydrolase that promotes the GTP-dependent binding of aminoacyl-tRNA to the A-site of ribosomes during protein biosynthesis. The chain is Elongation factor Tu from Bacillus anthracis (strain A0248).